A 432-amino-acid polypeptide reads, in one-letter code: Trigger factor (432 aa).

The 86-residue stretch at 161–246 (DDRVTIDFVG…LKKIENMVLP (86 aa)) folds into the PPIase FKBP-type domain.

This sequence belongs to the FKBP-type PPIase family. Tig subfamily.

The protein resides in the cytoplasm. It carries out the reaction [protein]-peptidylproline (omega=180) = [protein]-peptidylproline (omega=0). Involved in protein export. Acts as a chaperone by maintaining the newly synthesized protein in an open conformation. Functions as a peptidyl-prolyl cis-trans isomerase. This chain is Trigger factor, found in Haemophilus influenzae (strain PittEE).